Consider the following 252-residue polypeptide: 5'-nucleotidase SurE (252 aa).

Positions 8, 9, 39, and 91 each coordinate a divalent metal cation.

This sequence belongs to the SurE nucleotidase family. It depends on a divalent metal cation as a cofactor.

It is found in the cytoplasm. It carries out the reaction a ribonucleoside 5'-phosphate + H2O = a ribonucleoside + phosphate. Nucleotidase that shows phosphatase activity on nucleoside 5'-monophosphates. This is 5'-nucleotidase SurE from Bordetella petrii (strain ATCC BAA-461 / DSM 12804 / CCUG 43448).